We begin with the raw amino-acid sequence, 286 residues long: Phosphoribosylaminoimidazole-succinocarboxamide synthase (286 aa).

It belongs to the SAICAR synthetase family.

It carries out the reaction 5-amino-1-(5-phospho-D-ribosyl)imidazole-4-carboxylate + L-aspartate + ATP = (2S)-2-[5-amino-1-(5-phospho-beta-D-ribosyl)imidazole-4-carboxamido]succinate + ADP + phosphate + 2 H(+). The protein operates within purine metabolism; IMP biosynthesis via de novo pathway; 5-amino-1-(5-phospho-D-ribosyl)imidazole-4-carboxamide from 5-amino-1-(5-phospho-D-ribosyl)imidazole-4-carboxylate: step 1/2. In Actinobacillus succinogenes (strain ATCC 55618 / DSM 22257 / CCUG 43843 / 130Z), this protein is Phosphoribosylaminoimidazole-succinocarboxamide synthase.